The chain runs to 307 residues: Carbamate kinase (307 aa).

This sequence belongs to the carbamate kinase family.

The protein resides in the cytoplasm. It catalyses the reaction hydrogencarbonate + NH4(+) + ATP = carbamoyl phosphate + ADP + H2O + H(+). Its pathway is metabolic intermediate metabolism; carbamoyl phosphate degradation; CO(2) and NH(3) from carbamoyl phosphate: step 1/1. Its function is as follows. Carbamate kinase involved in the arginine deiminase pathway of fermentative arginine utilization. This Halobacterium salinarum (strain ATCC 700922 / JCM 11081 / NRC-1) (Halobacterium halobium) protein is Carbamate kinase (arcC).